We begin with the raw amino-acid sequence, 266 residues long: 5'-nucleotidase SurE (266 aa).

4 residues coordinate a divalent metal cation: Asp-10, Asp-11, Ser-41, and Asn-97.

It belongs to the SurE nucleotidase family. A divalent metal cation serves as cofactor.

Its subcellular location is the cytoplasm. It carries out the reaction a ribonucleoside 5'-phosphate + H2O = a ribonucleoside + phosphate. Nucleotidase that shows phosphatase activity on nucleoside 5'-monophosphates. The protein is 5'-nucleotidase SurE of Methanocella arvoryzae (strain DSM 22066 / NBRC 105507 / MRE50).